We begin with the raw amino-acid sequence, 416 residues long: MTRDIQTMAVKDVKKVVLAYSGGLDTSVILRWLQTTYNCEVVTFTADLGQGEELEPARRKAEMFGVKEIFVDDLRETFVKDFVFPMFRANAVYEGQYLLGTSIARPLIAQRQIEIAELTGADAVAHGATGKGNDQVRFELSYYALKPDVKVIAPWREWDLTSRTKLLEFAEANQIPIAKDKRGEAPFSVDANLLHSSSEGKLLEDPAEEPDEIVYQRTISPEAAPDKATIITIDFEHGDPVAIDGIRLSPATLLAKLNELGKANGIGRLDLVENRFVGMKSRGVYETPGGTILLVAHRGIESITLDREAAHLKDSLMPRYAELIYNGFWFSPERRMLQAAIDESQKSVTGRVRLKLYKGNTIVIGRESPNSLYSLKHVTFEDDQGAYDQVDAQGFIKLQSLRLRLAAIAGRRGGSL.

ATP is bound by residues 19-27 (AYSGGLDTS) and Ala-46. Residues Tyr-97 and Ser-102 each coordinate L-citrulline. Residue Gly-127 coordinates ATP. 3 residues coordinate L-aspartate: Thr-129, Asn-133, and Asp-134. Residue Asn-133 participates in L-citrulline binding. Residues Arg-137, Ser-188, Ser-197, Glu-273, and Tyr-285 each contribute to the L-citrulline site.

It belongs to the argininosuccinate synthase family. Type 1 subfamily. In terms of assembly, homotetramer.

The protein localises to the cytoplasm. It carries out the reaction L-citrulline + L-aspartate + ATP = 2-(N(omega)-L-arginino)succinate + AMP + diphosphate + H(+). The protein operates within amino-acid biosynthesis; L-arginine biosynthesis; L-arginine from L-ornithine and carbamoyl phosphate: step 2/3. The protein is Argininosuccinate synthase of Granulibacter bethesdensis (strain ATCC BAA-1260 / CGDNIH1).